Reading from the N-terminus, the 269-residue chain is Monofunctional glycosyltransferase (269 aa).

A helical transmembrane segment spans residues 46–66 (ILLTILIIIALFIGIMYFLST).

It belongs to the glycosyltransferase 51 family.

Its subcellular location is the cell membrane. The catalysed reaction is [GlcNAc-(1-&gt;4)-Mur2Ac(oyl-L-Ala-gamma-D-Glu-L-Lys-D-Ala-D-Ala)](n)-di-trans,octa-cis-undecaprenyl diphosphate + beta-D-GlcNAc-(1-&gt;4)-Mur2Ac(oyl-L-Ala-gamma-D-Glu-L-Lys-D-Ala-D-Ala)-di-trans,octa-cis-undecaprenyl diphosphate = [GlcNAc-(1-&gt;4)-Mur2Ac(oyl-L-Ala-gamma-D-Glu-L-Lys-D-Ala-D-Ala)](n+1)-di-trans,octa-cis-undecaprenyl diphosphate + di-trans,octa-cis-undecaprenyl diphosphate + H(+). The protein operates within cell wall biogenesis; peptidoglycan biosynthesis. Functionally, peptidoglycan polymerase that catalyzes glycan chain elongation using lipid-linked disaccharide-pentapeptide as the substrate. This Staphylococcus aureus (strain JH1) protein is Monofunctional glycosyltransferase.